We begin with the raw amino-acid sequence, 318 residues long: Ubiquitin-like domain-containing CTD phosphatase 1 (318 aa).

Residue A2 is modified to N-acetylalanine. Residues 3-81 enclose the Ubiquitin-like domain; the sequence is LPIIVKWGGQ…IMMMGTREES (79 aa). K117 is subject to N6-acetyllysine. Residues 133-294 enclose the FCP1 homology domain; that stretch reads PREGKKLLVL…LKLTQYLKEI (162 aa). Mg(2+) is bound by residues D143, D145, and D253.

It depends on Mg(2+) as a cofactor.

Its subcellular location is the nucleus. It catalyses the reaction O-phospho-L-seryl-[protein] + H2O = L-seryl-[protein] + phosphate. It carries out the reaction O-phospho-L-threonyl-[protein] + H2O = L-threonyl-[protein] + phosphate. Its function is as follows. Dephosphorylates 26S nuclear proteasomes, thereby decreasing their proteolytic activity. Recruited to the 19S regulatory particle of the 26S proteasome through its interaction with 19S component PSMD2/RPN1. Once recruited, dephosphorylates 19S component PSMC2/RPT1 which impairs PSMC2 ATPase activity and disrupts 26S proteasome assembly. Has also been reported to stimulate the proteolytic activity of the 26S proteasome. This chain is Ubiquitin-like domain-containing CTD phosphatase 1 (UBLCP1), found in Pongo abelii (Sumatran orangutan).